The chain runs to 215 residues: Orotate phosphoribosyltransferase (215 aa).

K26 is a binding site for 5-phospho-alpha-D-ribose 1-diphosphate. Residue 34–35 participates in orotate binding; it reads FF. 5-phospho-alpha-D-ribose 1-diphosphate-binding positions include 72–73, R99, K100, K103, H105, and 124–132; these read YK and DDVITAGTA. Residues T128 and R156 each contribute to the orotate site.

The protein belongs to the purine/pyrimidine phosphoribosyltransferase family. PyrE subfamily. As to quaternary structure, homodimer. It depends on Mg(2+) as a cofactor.

It catalyses the reaction orotidine 5'-phosphate + diphosphate = orotate + 5-phospho-alpha-D-ribose 1-diphosphate. It participates in pyrimidine metabolism; UMP biosynthesis via de novo pathway; UMP from orotate: step 1/2. Functionally, catalyzes the transfer of a ribosyl phosphate group from 5-phosphoribose 1-diphosphate to orotate, leading to the formation of orotidine monophosphate (OMP). In Yersinia pseudotuberculosis serotype O:1b (strain IP 31758), this protein is Orotate phosphoribosyltransferase.